A 475-amino-acid polypeptide reads, in one-letter code: Sulfate adenylyltransferase subunit 1 (475 aa).

One can recognise a tr-type G domain in the interval 25-239 (KSLLRFLTCG…EVLETVEIQR (215 aa)). The tract at residues 34 to 41 (GSVDDGKS) is G1. Position 34–41 (34–41 (GSVDDGKS)) interacts with GTP. Residues 92–96 (GITID) are G2. The interval 113–116 (DTPG) is G3. GTP is bound by residues 113–117 (DTPGH) and 168–171 (NKMD). The interval 168 to 171 (NKMD) is G4. Positions 206-208 (SAL) are G5.

It belongs to the TRAFAC class translation factor GTPase superfamily. Classic translation factor GTPase family. CysN/NodQ subfamily. As to quaternary structure, heterodimer composed of CysD, the smaller subunit, and CysN.

The enzyme catalyses sulfate + ATP + H(+) = adenosine 5'-phosphosulfate + diphosphate. The protein operates within sulfur metabolism; hydrogen sulfide biosynthesis; sulfite from sulfate: step 1/3. In terms of biological role, with CysD forms the ATP sulfurylase (ATPS) that catalyzes the adenylation of sulfate producing adenosine 5'-phosphosulfate (APS) and diphosphate, the first enzymatic step in sulfur assimilation pathway. APS synthesis involves the formation of a high-energy phosphoric-sulfuric acid anhydride bond driven by GTP hydrolysis by CysN coupled to ATP hydrolysis by CysD. This Escherichia fergusonii (strain ATCC 35469 / DSM 13698 / CCUG 18766 / IAM 14443 / JCM 21226 / LMG 7866 / NBRC 102419 / NCTC 12128 / CDC 0568-73) protein is Sulfate adenylyltransferase subunit 1.